The following is a 927-amino-acid chain: Nonsense-mediated mRNA decay factor SMG8 (927 aa).

Disordered regions lie at residues 543–581 (NTGKSGAPQDEDAGEDEAEEEEGQERELPTKKQLQNTAS), 611–636 (QARSEQLSNSEQNTTRSGSSSVDTEN), and 643–662 (QEPAKKEAREDVGPTDAVST). Acidic residues predominate over residues 551 to 566 (QDEDAGEDEAEEEEGQ). Positions 613–633 (RSEQLSNSEQNTTRSGSSSVD) are enriched in polar residues. The segment covering 644-654 (EPAKKEAREDV) has biased composition (basic and acidic residues).

This sequence belongs to the SMG8 family.

In terms of biological role, involved in nonsense-mediated decay (NMD) of mRNAs containing premature stop codons. Probable component of kinase complex containing nonC and recruited to stalled ribosomes. This is Nonsense-mediated mRNA decay factor SMG8 from Drosophila sechellia (Fruit fly).